We begin with the raw amino-acid sequence, 347 residues long: S-adenosylmethionine:tRNA ribosyltransferase-isomerase (347 aa).

This sequence belongs to the QueA family. As to quaternary structure, monomer.

It localises to the cytoplasm. It catalyses the reaction 7-aminomethyl-7-carbaguanosine(34) in tRNA + S-adenosyl-L-methionine = epoxyqueuosine(34) in tRNA + adenine + L-methionine + 2 H(+). Its pathway is tRNA modification; tRNA-queuosine biosynthesis. Functionally, transfers and isomerizes the ribose moiety from AdoMet to the 7-aminomethyl group of 7-deazaguanine (preQ1-tRNA) to give epoxyqueuosine (oQ-tRNA). In Methylococcus capsulatus (strain ATCC 33009 / NCIMB 11132 / Bath), this protein is S-adenosylmethionine:tRNA ribosyltransferase-isomerase.